Reading from the N-terminus, the 387-residue chain is Exodeoxyribonuclease 7 large subunit (387 aa).

The protein belongs to the XseA family. In terms of assembly, heterooligomer composed of large and small subunits.

The protein localises to the cytoplasm. The enzyme catalyses Exonucleolytic cleavage in either 5'- to 3'- or 3'- to 5'-direction to yield nucleoside 5'-phosphates.. In terms of biological role, bidirectionally degrades single-stranded DNA into large acid-insoluble oligonucleotides, which are then degraded further into small acid-soluble oligonucleotides. In Campylobacter jejuni subsp. jejuni serotype O:6 (strain 81116 / NCTC 11828), this protein is Exodeoxyribonuclease 7 large subunit.